Reading from the N-terminus, the 401-residue chain is ATP phosphoribosyltransferase regulatory subunit (401 aa).

This sequence belongs to the class-II aminoacyl-tRNA synthetase family. HisZ subfamily. In terms of assembly, heteromultimer composed of HisG and HisZ subunits.

The protein localises to the cytoplasm. It functions in the pathway amino-acid biosynthesis; L-histidine biosynthesis; L-histidine from 5-phospho-alpha-D-ribose 1-diphosphate: step 1/9. Functionally, required for the first step of histidine biosynthesis. May allow the feedback regulation of ATP phosphoribosyltransferase activity by histidine. This is ATP phosphoribosyltransferase regulatory subunit from Desulforamulus reducens (strain ATCC BAA-1160 / DSM 100696 / MI-1) (Desulfotomaculum reducens).